Here is a 160-residue protein sequence, read N- to C-terminus: Cyanate hydratase (160 aa).

Active-site residues include Arg-100, Glu-103, and Ser-126.

It belongs to the cyanase family.

The enzyme catalyses cyanate + hydrogencarbonate + 3 H(+) = NH4(+) + 2 CO2. Its function is as follows. Catalyzes the reaction of cyanate with bicarbonate to produce ammonia and carbon dioxide. This Penicillium rubens (strain ATCC 28089 / DSM 1075 / NRRL 1951 / Wisconsin 54-1255) (Penicillium chrysogenum) protein is Cyanate hydratase.